The sequence spans 554 residues: Glucose-6-phosphate isomerase (554 aa).

The Proton donor role is filled by E359. Catalysis depends on residues H390 and K518.

It belongs to the GPI family.

The protein localises to the cytoplasm. It carries out the reaction alpha-D-glucose 6-phosphate = beta-D-fructose 6-phosphate. Its pathway is carbohydrate biosynthesis; gluconeogenesis. The protein operates within carbohydrate degradation; glycolysis; D-glyceraldehyde 3-phosphate and glycerone phosphate from D-glucose: step 2/4. Functionally, catalyzes the reversible isomerization of glucose-6-phosphate to fructose-6-phosphate. In Pseudomonas entomophila (strain L48), this protein is Glucose-6-phosphate isomerase.